Here is a 91-residue protein sequence, read N- to C-terminus: Non-specific lipid-transfer protein P3 (91 aa).

4 disulfide bridges follow: Cys-3–Cys-50, Cys-13–Cys-27, Cys-28–Cys-73, and Cys-48–Cys-87.

It is found in the secreted. In terms of biological role, plant non-specific lipid-transfer proteins transfer phospholipids as well as galactolipids across membranes. May play a role in wax or cutin deposition in the cell walls of expanding epidermal cells and certain secretory tissues. This chain is Non-specific lipid-transfer protein P3, found in Vitis sp. (Grape).